A 345-amino-acid chain; its full sequence is Methylthioribose-1-phosphate isomerase (345 aa).

Residues 44–46 (RGA), Arg87, and Gln194 each bind substrate. The active-site Proton donor is the Asp235. 245–246 (NK) serves as a coordination point for substrate.

The protein belongs to the eIF-2B alpha/beta/delta subunits family. MtnA subfamily.

It carries out the reaction 5-(methylsulfanyl)-alpha-D-ribose 1-phosphate = 5-(methylsulfanyl)-D-ribulose 1-phosphate. Its pathway is amino-acid biosynthesis; L-methionine biosynthesis via salvage pathway; L-methionine from S-methyl-5-thio-alpha-D-ribose 1-phosphate: step 1/6. Catalyzes the interconversion of methylthioribose-1-phosphate (MTR-1-P) into methylthioribulose-1-phosphate (MTRu-1-P). In Heliobacterium modesticaldum (strain ATCC 51547 / Ice1), this protein is Methylthioribose-1-phosphate isomerase.